Here is a 244-residue protein sequence, read N- to C-terminus: ATP synthase subunit a (244 aa).

Helical transmembrane passes span 17 to 37 (LTNI…AILT), 75 to 95 (FLAL…LGLP), 112 to 132 (DPAI…YYGV), 170 to 190 (LYGN…LATS), and 221 to 241 (GAIQ…HKIS).

Belongs to the ATPase A chain family. As to quaternary structure, F-type ATPases have 2 components, CF(1) - the catalytic core - and CF(0) - the membrane proton channel. CF(1) has five subunits: alpha(3), beta(3), gamma(1), delta(1), epsilon(1). CF(0) has three main subunits: a(1), b(2) and c(9-12). The alpha and beta chains form an alternating ring which encloses part of the gamma chain. CF(1) is attached to CF(0) by a central stalk formed by the gamma and epsilon chains, while a peripheral stalk is formed by the delta and b chains. The F(1)F(0) complex interacts with SpoIIIJ and YqjG; YqgA is found in the same complex.

It localises to the cell membrane. Its function is as follows. Key component of the proton channel; it plays a direct role in the translocation of protons across the membrane. The sequence is that of ATP synthase subunit a from Bacillus subtilis (strain 168).